Consider the following 244-residue polypeptide: Capsid protein (244 aa).

Residues 1–24 (MSTSKRKRGDDSNWSKRVTKKKPS) carry the Bipartite nuclear localization signal motif. The disordered stretch occupies residues 1-39 (MSTSKRKRGDDSNWSKRVTKKKPSSAGLKRAGSKADRPS).

This sequence belongs to the geminiviridae capsid protein family. Homomultimer. Interacts with the movement protein. Binds to single-stranded and double-stranded viral DNA.

It is found in the virion. Its subcellular location is the host nucleus. In terms of biological role, encapsidates the viral genome into characteristic twinned ('geminate') particles. Binds the genomic viral ssDNA and shuttles it into and out of the cell nucleus. Plays a role in protection of the genome from degradation, virus acquisition and transmission by insect vectors, infectivity, and systemic movement. The CP of monopartite geminiviruses is absolutely essential for virus movement. The chain is Capsid protein from Avena sativa (Oat).